The following is a 627-amino-acid chain: Pescadillo homolog (627 aa).

Residues 321 to 414 (RLRTLFKGLK…QLLPTNKYFI (94 aa)) form the BRCT domain. Disordered regions lie at residues 450–469 (HAQSDDDSEDEAQEEEETVD), 488–566 (YKKY…MVKP), and 595–627 (TIEASEKEARKTAKREARKEAAAAAAKASKLGK). Serine 453 and serine 457 each carry phosphoserine. 2 stretches are compositionally biased toward acidic residues: residues 454–469 (DDDSEDEAQEEEETVD) and 497–521 (VNEDEEDPEDEDDNEDDDEEEEELD). The segment covering 522-533 (EKTKRLQEEKQK) has biased composition (basic and acidic residues). Positions 540 to 549 (KVHKVNKRQV) are enriched in basic residues. Composition is skewed to basic and acidic residues over residues 550–559 (HKAEVDEHRL) and 595–615 (TIEASEKEARKTAKREARKEA). Positions 582–625 (KEKEEWLLRKKRRTIEASEKEARKTAKREARKEAAAAAAKASKL) form a coiled coil. Low complexity predominate over residues 616–627 (AAAAAKASKLGK).

The protein belongs to the pescadillo family.

The protein resides in the nucleus. It is found in the nucleolus. It localises to the nucleoplasm. Its function is as follows. Required for maturation of ribosomal RNAs and formation of the large ribosomal subunit. The polypeptide is Pescadillo homolog (Drosophila simulans (Fruit fly)).